The primary structure comprises 207 residues: 8-oxoguanine DNA glycosylase/AP lyase (207 aa).

Active-site residues include Lys-128 and Asp-146.

This sequence belongs to the type-2 OGG1 family.

It catalyses the reaction 2'-deoxyribonucleotide-(2'-deoxyribose 5'-phosphate)-2'-deoxyribonucleotide-DNA = a 3'-end 2'-deoxyribonucleotide-(2,3-dehydro-2,3-deoxyribose 5'-phosphate)-DNA + a 5'-end 5'-phospho-2'-deoxyribonucleoside-DNA + H(+). In terms of biological role, catalyzes the excision of an oxidatively damaged form of guanine (7,8-dihydro-8-oxoguanine = 8-oxoG) from DNA. Also cleaves the DNA backbone at apurinic/apyrimidinic sites (AP sites). The chain is 8-oxoguanine DNA glycosylase/AP lyase from Saccharolobus islandicus (strain L.S.2.15 / Lassen #1) (Sulfolobus islandicus).